Consider the following 218-residue polypeptide: Probable transaldolase (218 aa).

Catalysis depends on K83, which acts as the Schiff-base intermediate with substrate.

Belongs to the transaldolase family. Type 3B subfamily.

The protein localises to the cytoplasm. The catalysed reaction is D-sedoheptulose 7-phosphate + D-glyceraldehyde 3-phosphate = D-erythrose 4-phosphate + beta-D-fructose 6-phosphate. It participates in carbohydrate degradation; pentose phosphate pathway; D-glyceraldehyde 3-phosphate and beta-D-fructose 6-phosphate from D-ribose 5-phosphate and D-xylulose 5-phosphate (non-oxidative stage): step 2/3. Transaldolase is important for the balance of metabolites in the pentose-phosphate pathway. The sequence is that of Probable transaldolase from Thermotoga sp. (strain RQ2).